A 1285-amino-acid chain; its full sequence is Dermonecrotic toxin (1285 aa).

A helical transmembrane segment spans residues 402–422 (MLVPAVGIPINFALSATALGL).

It localises to the cytoplasm. The protein localises to the secreted. It is found in the host membrane. This is a dermonecrotic toxin. This osteolytic toxin, induces bone resorption. Potent mitogen. This toxin is associated with the severe progressive form of the atrophic rhinitis, a major respiratory disease in pigs. The protein is Dermonecrotic toxin (toxA) of Pasteurella multocida.